Here is a 304-residue protein sequence, read N- to C-terminus: Small ribosomal subunit protein uS2 (304 aa).

N-acetylserine is present on Ser-2. Laminin-binding stretches follow at residues 161 to 180 (IPCN…MLAR) and 205 to 229 (RDPE…EFQG). [DE]-W-[ST] repeat units follow at residues 230–232 (EWS), 245–247 (DWS), 275–277 (DWS), 284–286 (DWS), and 302–304 (DWS). Positions 242-304 (EVADWSEGVA…DWGGATSDWS (63 aa)) are laminin-binding. The disordered stretch occupies residues 257-304 (IQQFPAGTPAPAPAVKTEDWSTQPATEDWSTAPTAQASDWGGATSDWS). Residues 276–293 (WSTQPATEDWSTAPTAQA) show a composition bias toward polar residues.

The protein belongs to the universal ribosomal protein uS2 family. Monomer (37LRP) and homodimer (67LR). Component of the small ribosomal subunit. Mature ribosomes consist of a small (40S) and a large (60S) subunit. The 40S subunit contains about 33 different proteins and 1 molecule of RNA (18S). The 60S subunit contains about 49 different proteins and 3 molecules of RNA (28S, 5.8S and 5S). Interacts with rps21. Interacts with several laminins including at least lamb1. Interacts with mdk. In terms of processing, acylated. Acylation may be a prerequisite for conversion of the monomeric 37 kDa laminin receptor precursor (37LRP) to the mature dimeric 67 kDa laminin receptor (67LR), and may provide a mechanism for membrane association. Post-translationally, cleaved by stromelysin-3 (ST3) at the cell surface. Cleavage by stromelysin-3 may be a mechanism to alter cell-extracellular matrix interactions.

The protein localises to the cell membrane. Its subcellular location is the cytoplasm. The protein resides in the nucleus. In terms of biological role, required for the assembly and/or stability of the 40S ribosomal subunit. Required for the processing of the 20S rRNA-precursor to mature 18S rRNA in a late step of the maturation of 40S ribosomal subunits. Also functions as a cell surface receptor for laminin. Plays a role in cell adhesion to the basement membrane and in the consequent activation of signaling transduction pathways. May play a role in cell fate determination and tissue morphogenesis. This is Small ribosomal subunit protein uS2 (rpsa) from Sparus aurata (Gilthead sea bream).